We begin with the raw amino-acid sequence, 430 residues long: Serine--tRNA ligase (430 aa).

237–239 (TAE) contacts L-serine. 268-270 (RSE) provides a ligand contact to ATP. Glu-291 serves as a coordination point for L-serine. 355 to 358 (EISS) is an ATP binding site. Position 391 (Ser-391) interacts with L-serine.

This sequence belongs to the class-II aminoacyl-tRNA synthetase family. Type-1 seryl-tRNA synthetase subfamily. As to quaternary structure, homodimer. The tRNA molecule binds across the dimer.

It localises to the cytoplasm. It carries out the reaction tRNA(Ser) + L-serine + ATP = L-seryl-tRNA(Ser) + AMP + diphosphate + H(+). The catalysed reaction is tRNA(Sec) + L-serine + ATP = L-seryl-tRNA(Sec) + AMP + diphosphate + H(+). It functions in the pathway aminoacyl-tRNA biosynthesis; selenocysteinyl-tRNA(Sec) biosynthesis; L-seryl-tRNA(Sec) from L-serine and tRNA(Sec): step 1/1. In terms of biological role, catalyzes the attachment of serine to tRNA(Ser). Is also able to aminoacylate tRNA(Sec) with serine, to form the misacylated tRNA L-seryl-tRNA(Sec), which will be further converted into selenocysteinyl-tRNA(Sec). In Salmonella schwarzengrund (strain CVM19633), this protein is Serine--tRNA ligase.